We begin with the raw amino-acid sequence, 526 residues long: Vang-like protein 2 (526 aa).

Residues 1 to 95 form a disordered region; sequence MDNESQYSGY…NEDLTRASKE (95 aa). Residues 1 to 109 lie on the Cytoplasmic side of the membrane; that stretch reads MDNESQYSGY…SPLECRRFAG (109 aa). The span at 15-33 shows a compositional bias: basic residues; that stretch reads SHSRSSRKHRDRRDRHRSK. 2 stretches are compositionally biased toward basic and acidic residues: residues 34-43 and 58-68; these read SRDSSSRGDK and ESTRGDDRDDN. The segment covering 70-83 has biased composition (low complexity); that stretch reads GETTTVVTGTSEHS. Residues 84–95 are compositionally biased toward basic and acidic residues; that stretch reads VSNEDLTRASKE. Residues 110 to 130 form a helical membrane-spanning segment; that stretch reads PIVSGVLGLFALLTPLAFLLL. The Extracellular portion of the chain corresponds to 131-148; that stretch reads PQLLWRDSLEPCGTPCEG. Residues 149–169 form a helical membrane-spanning segment; the sequence is LYVSLAFKLLVLLISSWALFL. Topologically, residues 170–178 are cytoplasmic; that stretch reads RPSRSTLPR. The chain crosses the membrane as a helical span at residues 179-199; the sequence is FFVFRCLLMALVFLFVASYWL. At 200 to 215 the chain is on the extracellular side; that stretch reads FYGVRVLEPRERDYRG. A helical membrane pass occupies residues 216-236; sequence IVGYAVSLVDALLFIQYLALV. The Cytoplasmic segment spans residues 237–526; that stretch reads LLEVRHLRPA…VMRLQSETSV (290 aa). Positions 523–526 match the PDZ-binding motif; the sequence is ETSV.

This sequence belongs to the Vang family. Interacts with the PDZ domain of dvl2/dsh. As to expression, ubiquitously expressed at the 4-cell stage. In early somitogenesis, becomes more abundant in anterior neural tissue where expression is seen in the neural tube but not in the notochord.

Its subcellular location is the cell membrane. Its function is as follows. Plays a role in non-canonical Wnt/planar cell polarity (PCP) signaling to regulate convergent extension cell movements during gastrulation. Acts together with scrib and prickle1 and localizes prickle1 and dvl2/dsh to the plasma membrane. Has an overlapping role with kny during both convergent extension and eye development. In the eye, involved in establishing proper alignment of the anterior neural plate and midline cells expressing shha and shhb/twhh. Has indirect effects on a number of other developmental processes including notochord shape formation, neural progenitor cell morphogenesis, segregation of somites and adaxial cell development. Together with prickle1, required for the posterior (caudal) movement of branchiomotor neurons in the hindbrain independently of, and a few hours after, convergent extension. May be required for cell surface localization of fzd3 and fzd6 in the inner ear. This is Vang-like protein 2 from Danio rerio (Zebrafish).